The chain runs to 565 residues: Probable beta-glucosidase btgE (565 aa).

The signal sequence occupies residues 1-18 (MRGAILATAAALAGTAMA). The segment at 246–304 (TGQDEPTSAPAAPSTTAVPATTTAAPETTTAAPDTTTAVPSTSSAAPSSSSTAPASTGA) is disordered. Residues 251–304 (PTSAPAAPSTTAVPATTTAAPETTTAAPDTTTAVPSTSSAAPSSSSTAPASTGA) show a composition bias toward low complexity. Residue glutamate 405 is the Proton donor of the active site. The active-site Nucleophile is glutamate 501.

This sequence belongs to the glycosyl hydrolase 17 family.

The protein resides in the secreted. It is found in the cell wall. The enzyme catalyses Hydrolysis of terminal, non-reducing beta-D-glucosyl residues with release of beta-D-glucose.. The protein operates within glycan metabolism; cellulose degradation. In terms of biological role, beta-glucosidases are one of a number of cellulolytic enzymes involved in the degradation of cellulosic biomass. Catalyzes the last step releasing glucose from the inhibitory cellobiose. The sequence is that of Probable beta-glucosidase btgE (btgE) from Aspergillus fumigatus (strain CBS 144.89 / FGSC A1163 / CEA10) (Neosartorya fumigata).